Reading from the N-terminus, the 489-residue chain is 3-octaprenyl-4-hydroxybenzoate carboxy-lyase (489 aa).

Residue Asn-172 participates in Mn(2+) binding. Prenylated FMN-binding positions include Val-175 to Arg-177, Arg-189 to Leu-191, and Arg-194 to Gly-195. Position 240 (Glu-240) interacts with Mn(2+). Residue Asp-288 is the Proton donor of the active site.

Belongs to the UbiD family. Homohexamer. Requires prenylated FMN as cofactor. Mn(2+) is required as a cofactor.

Its subcellular location is the cell membrane. It carries out the reaction a 4-hydroxy-3-(all-trans-polyprenyl)benzoate + H(+) = a 2-(all-trans-polyprenyl)phenol + CO2. Its pathway is cofactor biosynthesis; ubiquinone biosynthesis. Catalyzes the decarboxylation of 3-octaprenyl-4-hydroxy benzoate to 2-octaprenylphenol, an intermediate step in ubiquinone biosynthesis. The polypeptide is 3-octaprenyl-4-hydroxybenzoate carboxy-lyase (Wigglesworthia glossinidia brevipalpis).